Reading from the N-terminus, the 478-residue chain is Leukotoxin secretion protein D (478 aa).

Residues 1–59 are Cytoplasmic-facing; the sequence is MKIWLSGIYEFFLRYKNTWAEVWKIRKELDHPNRKKDESEFLPAHLDLIETPVSKKPRL. Residues 60–80 form a helical membrane-spanning segment; sequence IAYLIMLFLVVAIVLASVSKV. The Periplasmic portion of the chain corresponds to 81 to 478; that stretch reads EIVATAPGKL…ESVTESLRER (398 aa).

Belongs to the membrane fusion protein (MFP) (TC 8.A.1) family.

The protein resides in the cell inner membrane. Involved in the transport of the Leukotoxin. The protein is Leukotoxin secretion protein D (lktD) of Mannheimia haemolytica (Pasteurella haemolytica).